A 631-amino-acid polypeptide reads, in one-letter code: Chaperone protein DnaK (631 aa).

Thr197 carries the phosphothreonine; by autocatalysis modification. The segment at 600–631 is disordered; it reads KKENPQAADAQQGNTANAGKKKDDDVIDAEVE.

It belongs to the heat shock protein 70 family.

Its function is as follows. Acts as a chaperone. The polypeptide is Chaperone protein DnaK (Wolinella succinogenes (strain ATCC 29543 / DSM 1740 / CCUG 13145 / JCM 31913 / LMG 7466 / NCTC 11488 / FDC 602W) (Vibrio succinogenes)).